Reading from the N-terminus, the 502-residue chain is Glycerol kinase (502 aa).

Thr14 lines the ADP pocket. Positions 14, 15, and 16 each coordinate ATP. Thr14 is a sn-glycerol 3-phosphate binding site. Arg18 provides a ligand contact to ADP. The sn-glycerol 3-phosphate site is built by Arg84, Glu85, Tyr136, and Asp246. The glycerol site is built by Arg84, Glu85, Tyr136, Asp246, and Gln247. ADP contacts are provided by Thr268 and Gly311. ATP is bound by residues Thr268, Gly311, Gln315, and Gly412. 2 residues coordinate ADP: Gly412 and Asn416.

This sequence belongs to the FGGY kinase family. As to quaternary structure, homotetramer and homodimer (in equilibrium). Heterodimer with EIIA-Glc. Binds 1 zinc ion per glycerol kinase EIIA-Glc dimer. The zinc ion is important for dimerization.

It catalyses the reaction glycerol + ATP = sn-glycerol 3-phosphate + ADP + H(+). It functions in the pathway polyol metabolism; glycerol degradation via glycerol kinase pathway; sn-glycerol 3-phosphate from glycerol: step 1/1. Its activity is regulated as follows. Activity of this regulatory enzyme is affected by several metabolites. Allosterically and non-competitively inhibited by fructose 1,6-bisphosphate (FBP) and unphosphorylated phosphocarrier protein EIIA-Glc (III-Glc), an integral component of the bacterial phosphotransferase (PTS) system. Key enzyme in the regulation of glycerol uptake and metabolism. Catalyzes the phosphorylation of glycerol to yield sn-glycerol 3-phosphate. In Escherichia fergusonii (strain ATCC 35469 / DSM 13698 / CCUG 18766 / IAM 14443 / JCM 21226 / LMG 7866 / NBRC 102419 / NCTC 12128 / CDC 0568-73), this protein is Glycerol kinase.